A 35-amino-acid polypeptide reads, in one-letter code: Photosystem II reaction center protein T (35 aa).

Residues 3 to 23 traverse the membrane as a helical segment; it reads SVAYILILTLAIGVLFFAIAF.

This sequence belongs to the PsbT family. In terms of assembly, PSII is composed of 1 copy each of membrane proteins PsbA, PsbB, PsbC, PsbD, PsbE, PsbF, PsbH, PsbI, PsbJ, PsbK, PsbL, PsbM, PsbT, PsbX, PsbY, PsbZ, Psb30/Ycf12, peripheral proteins PsbO, CyanoQ (PsbQ), PsbU, PsbV and a large number of cofactors. It forms dimeric complexes.

The protein localises to the cellular thylakoid membrane. Found at the monomer-monomer interface of the photosystem II (PS II) dimer, plays a role in assembly and dimerization of PSII. PSII is a light-driven water plastoquinone oxidoreductase, using light energy to abstract electrons from H(2)O, generating a proton gradient subsequently used for ATP formation. This Nostoc sp. (strain PCC 7120 / SAG 25.82 / UTEX 2576) protein is Photosystem II reaction center protein T.